Reading from the N-terminus, the 431-residue chain is 5-methylthioadenosine/S-adenosylhomocysteine deaminase (431 aa).

Positions 66 and 68 each coordinate Zn(2+). Positions 95, 147, and 185 each coordinate substrate. H212 contacts Zn(2+). Residues E215 and D300 each coordinate substrate. Zn(2+) is bound at residue D300.

The protein belongs to the metallo-dependent hydrolases superfamily. MTA/SAH deaminase family. Zn(2+) is required as a cofactor.

The enzyme catalyses S-adenosyl-L-homocysteine + H2O + H(+) = S-inosyl-L-homocysteine + NH4(+). The catalysed reaction is S-methyl-5'-thioadenosine + H2O + H(+) = S-methyl-5'-thioinosine + NH4(+). Catalyzes the deamination of 5-methylthioadenosine and S-adenosyl-L-homocysteine into 5-methylthioinosine and S-inosyl-L-homocysteine, respectively. Is also able to deaminate adenosine. The chain is 5-methylthioadenosine/S-adenosylhomocysteine deaminase from Acetivibrio thermocellus (strain ATCC 27405 / DSM 1237 / JCM 9322 / NBRC 103400 / NCIMB 10682 / NRRL B-4536 / VPI 7372) (Clostridium thermocellum).